A 160-amino-acid polypeptide reads, in one-letter code: uncharacterized protein (160 aa).

The residue at position 49 (Tyr49) is a Phosphotyrosine.

Functionally, may be involved in the assembly, structure, or function of the flagellum. May polymerize to form a filamentous structure that is part of the flagellum. This is an uncharacterized protein from Bacillus subtilis (strain 168).